The sequence spans 379 residues: Elongation factor Ts, mitochondrial (379 aa).

A mitochondrion-targeting transit peptide spans 1 to 33 (MAWGQGAKRSILGLLFRSQHQTARAYSSSAFQT).

The protein belongs to the EF-Ts family.

Its subcellular location is the mitochondrion. Functionally, associates with the EF-Tu.GDP complex and induces the exchange of GDP to GTP. It remains bound to the aminoacyl-tRNA.EF-Tu.GTP complex up to the GTP hydrolysis stage on the ribosome. This is Elongation factor Ts, mitochondrial from Zea mays (Maize).